We begin with the raw amino-acid sequence, 226 residues long: Urease accessory protein UreF (226 aa).

The protein belongs to the UreF family. As to quaternary structure, ureD, UreF and UreG form a complex that acts as a GTP-hydrolysis-dependent molecular chaperone, activating the urease apoprotein by helping to assemble the nickel containing metallocenter of UreC. The UreE protein probably delivers the nickel.

Its subcellular location is the cytoplasm. In terms of biological role, required for maturation of urease via the functional incorporation of the urease nickel metallocenter. In Burkholderia vietnamiensis (strain G4 / LMG 22486) (Burkholderia cepacia (strain R1808)), this protein is Urease accessory protein UreF.